The primary structure comprises 144 residues: Large ribosomal subunit protein uL16 (144 aa).

It belongs to the universal ribosomal protein uL16 family. As to quaternary structure, part of the 50S ribosomal subunit.

Its function is as follows. Binds 23S rRNA and is also seen to make contacts with the A and possibly P site tRNAs. This chain is Large ribosomal subunit protein uL16, found in Levilactobacillus brevis (strain ATCC 367 / BCRC 12310 / CIP 105137 / JCM 1170 / LMG 11437 / NCIMB 947 / NCTC 947) (Lactobacillus brevis).